The chain runs to 880 residues: DNA gyrase subunit A (880 aa).

Positions 35-530 (LPDVRDGLKP…ASGDIDLEDL (496 aa)) constitute a Topo IIA-type catalytic domain. The O-(5'-phospho-DNA)-tyrosine intermediate role is filled by tyrosine 123. The GyrA-box motif lies at 557 to 563 (QRRGGKG).

It belongs to the type II topoisomerase GyrA/ParC subunit family. Heterotetramer, composed of two GyrA and two GyrB chains. In the heterotetramer, GyrA contains the active site tyrosine that forms a transient covalent intermediate with DNA, while GyrB binds cofactors and catalyzes ATP hydrolysis.

It localises to the cytoplasm. The catalysed reaction is ATP-dependent breakage, passage and rejoining of double-stranded DNA.. In terms of biological role, a type II topoisomerase that negatively supercoils closed circular double-stranded (ds) DNA in an ATP-dependent manner to modulate DNA topology and maintain chromosomes in an underwound state. Negative supercoiling favors strand separation, and DNA replication, transcription, recombination and repair, all of which involve strand separation. Also able to catalyze the interconversion of other topological isomers of dsDNA rings, including catenanes and knotted rings. Type II topoisomerases break and join 2 DNA strands simultaneously in an ATP-dependent manner. The sequence is that of DNA gyrase subunit A from Haemophilus influenzae (strain ATCC 51907 / DSM 11121 / KW20 / Rd).